The chain runs to 198 residues: Recombination protein RecR (198 aa).

The C4-type zinc finger occupies Cys58–Cys73. The region spanning Ser81–Pro175 is the Toprim domain.

It belongs to the RecR family.

Its function is as follows. May play a role in DNA repair. It seems to be involved in an RecBC-independent recombinational process of DNA repair. It may act with RecF and RecO. The sequence is that of Recombination protein RecR from Clostridium novyi (strain NT).